The primary structure comprises 476 residues: Zinc finger protein 563 (476 aa).

Residues 4–96 (VAFEDVAVNF…IRDSIVNNSI (93 aa)) form the KRAB domain. The C2H2-type 1; degenerate zinc finger occupies 101–125 (DPCQSAECEEVIMGHLSLNSHIRVD). A C2H2-type 2; degenerate zinc finger spans residues 169–191 (YECKECGKTFSSRRNLRRHMVVQ). 10 consecutive C2H2-type zinc fingers follow at residues 197-219 (YKCKLCGKAFFWPSLLRMHERTH), 225-247 (YECKQCSKAFPFYSSYRRHERMH), 253-275 (YECKQCSKALPDSSSYIRHERTH), 281-303 (YTCKQCGKAFSVSSSLRRHETTH), 309-331 (YECKQCGKTFHHLGSFQIHMKRH), 337-359 (HKCKICGKGFDRPSLVRYHERIH), 365-387 (YECKQCGKTLSHSSSFRRHMIMH), 393-415 (HKCKICGKAFVYPSVCQRHEKSH), 421-443 (YECKQCGKALSHSSSFRRHMVMH), and 449-471 (NKCKVCGKAFVYPSVCQRHEKTH).

This sequence belongs to the krueppel C2H2-type zinc-finger protein family.

The protein localises to the nucleus. In terms of biological role, may be involved in transcriptional regulation. The protein is Zinc finger protein 563 (ZNF563) of Homo sapiens (Human).